A 147-amino-acid polypeptide reads, in one-letter code: Interleukin-4 (147 aa).

The signal sequence occupies residues 1 to 24 (MGLPAQLPVTLLCLLAGTAHFIQG). Cysteines 48 and 88 form a disulfide. Asparagine 62 carries N-linked (GlcNAc...) asparagine glycosylation.

It belongs to the IL-4/IL-13 family.

It localises to the secreted. In terms of biological role, participates in at least several B-cell activation processes as well as of other cell types. It is a costimulator of DNA-synthesis. It induces the expression of class II MHC molecules on resting B-cells. It enhances both secretion and cell surface expression of IgE and IgG1. It also regulates the expression of the low affinity Fc receptor for IgE (CD23) on both lymphocytes and monocytes. Positively regulates IL31RA expression in macrophages. Stimulates autophagy in dendritic cells by interfering with mTORC1 signaling and through the induction of RUFY4. The protein is Interleukin-4 (IL4) of Oryctolagus cuniculus (Rabbit).